We begin with the raw amino-acid sequence, 260 residues long: Cytochrome c oxidase subunit 2 (260 aa).

Residues 1–41 (MIVREWLFFTMAPCDAAEPWQLGFQDAATPMMQGIIDLHHD) are Mitochondrial intermembrane-facing. A helical transmembrane segment spans residues 42–58 (IFFFLILILVFVSWILV). Residues 59 to 82 (RALWHFHYKKNPIPQRIVHGTTIE) are Mitochondrial matrix-facing. Residues 83–104 (IIRTIFPSIILMFIAIPSFALL) traverse the membrane as a helical segment. At 105 to 260 (YSMDEVVVDP…NQLIPQTGEA (156 aa)) the chain is on the mitochondrial intermembrane side. The Cu cation site is built by His-187, Cys-222, Glu-224, Cys-226, His-230, and Met-233. Mg(2+) is bound at residue Glu-224.

It belongs to the cytochrome c oxidase subunit 2 family. In terms of assembly, component of the cytochrome c oxidase (complex IV, CIV), a multisubunit enzyme composed of a catalytic core of 3 subunits and several supernumerary subunits. The complex exists as a monomer or a dimer and forms supercomplexes (SCs) in the inner mitochondrial membrane with ubiquinol-cytochrome c oxidoreductase (cytochrome b-c1 complex, complex III, CIII). Cu cation is required as a cofactor.

It is found in the mitochondrion inner membrane. It catalyses the reaction 4 Fe(II)-[cytochrome c] + O2 + 8 H(+)(in) = 4 Fe(III)-[cytochrome c] + 2 H2O + 4 H(+)(out). In terms of biological role, component of the cytochrome c oxidase, the last enzyme in the mitochondrial electron transport chain which drives oxidative phosphorylation. The respiratory chain contains 3 multisubunit complexes succinate dehydrogenase (complex II, CII), ubiquinol-cytochrome c oxidoreductase (cytochrome b-c1 complex, complex III, CIII) and cytochrome c oxidase (complex IV, CIV), that cooperate to transfer electrons derived from NADH and succinate to molecular oxygen, creating an electrochemical gradient over the inner membrane that drives transmembrane transport and the ATP synthase. Cytochrome c oxidase is the component of the respiratory chain that catalyzes the reduction of oxygen to water. Electrons originating from reduced cytochrome c in the intermembrane space (IMS) are transferred via the dinuclear copper A center (CU(A)) of subunit 2 and heme A of subunit 1 to the active site in subunit 1, a binuclear center (BNC) formed by heme A3 and copper B (CU(B)). The BNC reduces molecular oxygen to 2 water molecules using 4 electrons from cytochrome c in the IMS and 4 protons from the mitochondrial matrix. In Beta vulgaris (Sugar beet), this protein is Cytochrome c oxidase subunit 2 (COX2).